Consider the following 297-residue polypeptide: UDP-3-O-acyl-N-acetylglucosamine deacetylase (297 aa).

Zn(2+) is bound by residues H77, H236, and D240. H263 (proton donor) is an active-site residue.

Belongs to the LpxC family. Zn(2+) is required as a cofactor.

It catalyses the reaction a UDP-3-O-[(3R)-3-hydroxyacyl]-N-acetyl-alpha-D-glucosamine + H2O = a UDP-3-O-[(3R)-3-hydroxyacyl]-alpha-D-glucosamine + acetate. It participates in glycolipid biosynthesis; lipid IV(A) biosynthesis; lipid IV(A) from (3R)-3-hydroxytetradecanoyl-[acyl-carrier-protein] and UDP-N-acetyl-alpha-D-glucosamine: step 2/6. Its function is as follows. Catalyzes the hydrolysis of UDP-3-O-myristoyl-N-acetylglucosamine to form UDP-3-O-myristoylglucosamine and acetate, the committed step in lipid A biosynthesis. The protein is UDP-3-O-acyl-N-acetylglucosamine deacetylase of Psychrobacter sp. (strain PRwf-1).